Here is a 226-residue protein sequence, read N- to C-terminus: N-acetyltransferase family 8 member 2 (226 aa).

Helical transmembrane passes span 33 to 55 (FYHV…TIIL) and 60 to 82 (WLLA…WVSC). The region spanning 69-221 (LFLLCLRLIF…FHFTYSLPSV (153 aa)) is the N-acetyltransferase domain. Lys204 is modified (N6-acetyllysine).

It belongs to the camello family.

It is found in the membrane. Its function is as follows. Probable acetyltransferase. Has no detectable histone acetyltransferase activity towards histone H3 or H4. This chain is N-acetyltransferase family 8 member 2, found in Rattus norvegicus (Rat).